The primary structure comprises 89 residues: Small ribosomal subunit protein uS15 (89 aa).

The span at 1-21 shows a compositional bias: basic and acidic residues; that stretch reads MALSKEQKTETLKEFGLHETD. Positions 1–22 are disordered; the sequence is MALSKEQKTETLKEFGLHETDT.

The protein belongs to the universal ribosomal protein uS15 family. In terms of assembly, part of the 30S ribosomal subunit. Forms a bridge to the 50S subunit in the 70S ribosome, contacting the 23S rRNA.

Its function is as follows. One of the primary rRNA binding proteins, it binds directly to 16S rRNA where it helps nucleate assembly of the platform of the 30S subunit by binding and bridging several RNA helices of the 16S rRNA. Forms an intersubunit bridge (bridge B4) with the 23S rRNA of the 50S subunit in the ribosome. In Corynebacterium jeikeium (strain K411), this protein is Small ribosomal subunit protein uS15.